The chain runs to 239 residues: Ribonuclease PH (239 aa).

Phosphate-binding positions include Arg87 and 125 to 127 (GTR).

It belongs to the RNase PH family. Homohexameric ring arranged as a trimer of dimers.

The enzyme catalyses tRNA(n+1) + phosphate = tRNA(n) + a ribonucleoside 5'-diphosphate. In terms of biological role, phosphorolytic 3'-5' exoribonuclease that plays an important role in tRNA 3'-end maturation. Removes nucleotide residues following the 3'-CCA terminus of tRNAs; can also add nucleotides to the ends of RNA molecules by using nucleoside diphosphates as substrates, but this may not be physiologically important. Probably plays a role in initiation of 16S rRNA degradation (leading to ribosome degradation) during starvation. This Pseudomonas paraeruginosa (strain DSM 24068 / PA7) (Pseudomonas aeruginosa (strain PA7)) protein is Ribonuclease PH.